The chain runs to 84 residues: Conophysin-R (84 aa).

Intrachain disulfides connect C6–C46, C9–C20, C14–C36, C21–C26, C53–C71, C65–C83, and C72–C77.

As to expression, expressed by the venom duct.

Its subcellular location is the secreted. Targets vasopressin-oxytocin related receptors. No effect observed when injected into goldfish or into mice. This chain is Conophysin-R, found in Conus radiatus (Rayed cone).